The primary structure comprises 412 residues: Tyrosine--tRNA ligase (412 aa).

Y31 contacts L-tyrosine. The 'HIGH' region motif lies at 36-45 (PTAPSLHIGH). Residues Y162 and Q166 each contribute to the L-tyrosine site. Positions 222-226 (KIGKT) match the 'KMSKS' region motif. K225 serves as a coordination point for ATP. Positions 345 to 411 (KRWLDIVVEL…GKRKKQVIDL (67 aa)) constitute an S4 RNA-binding domain.

It belongs to the class-I aminoacyl-tRNA synthetase family. TyrS type 1 subfamily. As to quaternary structure, homodimer.

The protein resides in the cytoplasm. It carries out the reaction tRNA(Tyr) + L-tyrosine + ATP = L-tyrosyl-tRNA(Tyr) + AMP + diphosphate + H(+). Functionally, catalyzes the attachment of tyrosine to tRNA(Tyr) in a two-step reaction: tyrosine is first activated by ATP to form Tyr-AMP and then transferred to the acceptor end of tRNA(Tyr). In Chlamydia trachomatis serovar L2 (strain ATCC VR-902B / DSM 19102 / 434/Bu), this protein is Tyrosine--tRNA ligase.